Consider the following 588-residue polypeptide: Pleckstrin homology domain-containing family A member 4 (588 aa).

The PH domain occupies 54–153 (PVHIRGWLHK…WLRALGRASR (100 aa)). Disordered stretches follow at residues 155 to 349 (EGED…QASM) and 495 to 588 (AGLG…VDHL). Position 164 is a phosphoserine (Ser-164). The segment covering 183-193 (VNRREEGRISE) has biased composition (basic and acidic residues). A compositionally biased stretch (polar residues) spans 211-222 (TPNSTVDLQTDT). Composition is skewed to low complexity over residues 246 to 260 (PRPR…PLSA) and 321 to 334 (QRTQ…GSST). Ser-562 is modified (phosphoserine).

The protein localises to the cytoplasm. Its subcellular location is the membrane. Functionally, binds specifically to phosphatidylinositol 3-phosphate (PtdIns3P), but not to other phosphoinositides. The polypeptide is Pleckstrin homology domain-containing family A member 4 (Plekha4) (Mus musculus (Mouse)).